The primary structure comprises 340 residues: Dof zinc finger protein DOF2.2 (340 aa).

Residues 12-33 (PPINWPQSANPNNHPHHHQLQE) form a disordered region. Residues 94–148 (LKCPRCDSANTKFCYFNNYNLTQPRHFCKACRRYWTRGGALRNVPVGGGCRRNKK) form a Dof-type zinc finger. 4 residues coordinate Zn(2+): Cys96, Cys99, Cys121, and Cys124. 2 disordered regions span residues 138–180 (PVGG…TSNV) and 301–340 (GNISRPVSGLTSPGNQSNQYWTGQGLPGSSSNDHHHQHLM). A compositionally biased stretch (low complexity) spans 151–165 (SGNSKSSSSSQNKQS). Composition is skewed to polar residues over residues 166–180 (TSMVNATSPTNTSNV) and 309–331 (GLTSPGNQSNQYWTGQGLPGSSS).

It localises to the nucleus. In terms of biological role, transcription factor that binds specifically to a 5'-AA[AG]G-3' consensus core sequence. This chain is Dof zinc finger protein DOF2.2 (DOF2.2), found in Arabidopsis thaliana (Mouse-ear cress).